The chain runs to 262 residues: Acyl-[acyl-carrier-protein]--UDP-N-acetylglucosamine O-acyltransferase (262 aa).

It belongs to the transferase hexapeptide repeat family. LpxA subfamily. Homotrimer.

Its subcellular location is the cytoplasm. The catalysed reaction is a (3R)-hydroxyacyl-[ACP] + UDP-N-acetyl-alpha-D-glucosamine = a UDP-3-O-[(3R)-3-hydroxyacyl]-N-acetyl-alpha-D-glucosamine + holo-[ACP]. The protein operates within glycolipid biosynthesis; lipid IV(A) biosynthesis; lipid IV(A) from (3R)-3-hydroxytetradecanoyl-[acyl-carrier-protein] and UDP-N-acetyl-alpha-D-glucosamine: step 1/6. Its function is as follows. Involved in the biosynthesis of lipid A, a phosphorylated glycolipid that anchors the lipopolysaccharide to the outer membrane of the cell. The protein is Acyl-[acyl-carrier-protein]--UDP-N-acetylglucosamine O-acyltransferase of Pectobacterium atrosepticum (strain SCRI 1043 / ATCC BAA-672) (Erwinia carotovora subsp. atroseptica).